We begin with the raw amino-acid sequence, 493 residues long: Probable polyol transporter 6 (493 aa).

A run of 12 helical transmembrane segments spans residues 25-45 (SIVS…MVFI), 54-74 (VQIE…SLLA), 85-105 (YTIV…GWGP), 116-136 (TAGL…AEIA), 142-162 (GLLA…GYIV), 177-197 (LMLG…LKMP), 275-295 (VLLT…EAVL), 313-333 (LFLV…TATL), 343-363 (LLLT…FGLT), 372-392 (LAWA…FFSI), 414-434 (GASL…MSFL), and 444-464 (GAFF…FFLL).

It belongs to the major facilitator superfamily. Sugar transporter (TC 2.A.1.1) family.

It localises to the membrane. Its function is as follows. Plasma membrane sugar-proton symporter. The sequence is that of Probable polyol transporter 6 (PLT6) from Arabidopsis thaliana (Mouse-ear cress).